Reading from the N-terminus, the 279-residue chain is Pantothenate synthetase (279 aa).

Residue 26–33 (MGNLHDGH) coordinates ATP. Residue His-33 is the Proton donor of the active site. Gln-57 serves as a coordination point for (R)-pantoate. Gln-57 is a beta-alanine binding site. 144 to 147 (GKKD) provides a ligand contact to ATP. Residue Gln-150 coordinates (R)-pantoate. Residues Val-173 and 181 to 184 (LSSR) each bind ATP.

Belongs to the pantothenate synthetase family. Homodimer.

The protein localises to the cytoplasm. The enzyme catalyses (R)-pantoate + beta-alanine + ATP = (R)-pantothenate + AMP + diphosphate + H(+). The protein operates within cofactor biosynthesis; (R)-pantothenate biosynthesis; (R)-pantothenate from (R)-pantoate and beta-alanine: step 1/1. Functionally, catalyzes the condensation of pantoate with beta-alanine in an ATP-dependent reaction via a pantoyl-adenylate intermediate. This chain is Pantothenate synthetase, found in Burkholderia mallei (strain NCTC 10229).